The sequence spans 890 residues: Translation initiation factor IF-2 (890 aa).

The interval 45 to 302 (LIDHLNQKNS…SSLQQGFQKP (258 aa)) is disordered. Over residues 67 to 81 (STLNIPSTGGKSKSV) the composition is skewed to polar residues. The span at 92–217 (VKRDPQEAER…RMAEENKWTD (126 aa)) shows a compositional bias: basic and acidic residues. Over residues 252-266 (GRGRNAKAARPKKGN) the composition is skewed to basic residues. Positions 267–280 (KHAESKADREEARA) are enriched in basic and acidic residues. The region spanning 389-558 (PRAPVVTIMG…LLQAEVLELK (170 aa)) is the tr-type G domain. Residues 398-405 (GHVDHGKT) are G1. Position 398-405 (398-405 (GHVDHGKT)) interacts with GTP. The interval 423-427 (GITQH) is G2. A G3 region spans residues 444–447 (DTPG). GTP contacts are provided by residues 444-448 (DTPGH) and 498-501 (NKID). Positions 498-501 (NKID) are G4. The G5 stretch occupies residues 534–536 (SAK). Lys808 carries the post-translational modification N6-acetyllysine.

This sequence belongs to the TRAFAC class translation factor GTPase superfamily. Classic translation factor GTPase family. IF-2 subfamily.

It is found in the cytoplasm. One of the essential components for the initiation of protein synthesis. Protects formylmethionyl-tRNA from spontaneous hydrolysis and promotes its binding to the 30S ribosomal subunits. Also involved in the hydrolysis of GTP during the formation of the 70S ribosomal complex. The chain is Translation initiation factor IF-2 from Shigella dysenteriae serotype 1 (strain Sd197).